Reading from the N-terminus, the 836-residue chain is MNGINTANEEITRSLEESLNICKQSSRLMQRNLQTGRLMDAFRNCSISLVEMRNSALTPKQYYELYMFNMESLRLLGGTLLETHLNGTHNLMDLYELVQYAGSIVPRLYLMITVGSAYLETPNALVREIMNDLLDMCRGVQHPLRGLFLRHYLLTQTRKGLPLGSEDEEDASRKGTVLDSVKFLVINFTEMNKLWVRIQHLGPIKEFSKRTQERNELKVLVGLNLVRLSQLNLDIDTYRDHVLPAIIEQIIECRDSLAQEYLVEVICQAFSDNMHLQTLDTYFGTVIKLSPSVNVTQLVVAMLNRLTDYVQREYESDSSNEDESETVTEKLGDIKINEEVQQKDEQECPGDKVIPPEYAIQEVLWSHVVEVIQSRSGLPLDCIVSILSSILNFFLRCYPYKPQYADRVFQYINEHIINQPSLRSALHERPLQKSLCAILLLPLTYFPSFSYCLELQNFLPVFNAQDPNLRYDIARMIVQKIIEKGHSLSELTEAQELLGFVSVIIEKKGVDSLDDLQNVALMVHYLNNDDPQIQIEILRSLKDTFIKAGENVKYLLPVVVNRCIFLARNFRIFKCMDWAEKVRLLWEFVNTCINVLYKNGDSLELCLALYLSAAEMADQENYPDFAYEFFTQAFSIYEESVLDSELQYQQLLMIIGKLQKTRNFSVDDYDTLITKCTLYASKLLKKPDQCCGIYLASHLWWQVASGEDSRPFQDPKRVLECLQKSLKIADACMDQLTSLKLFINILERYFYYYDQHCESIIAKHISGLIDLTEQNMRSILISSPADLIASDPRAYASSIWEVANVSVIDSLKNHLERATAYAEKRSEDERWSSIFQ.

A phosphoserine mark is found at serine 316, serine 318, and serine 783.

This sequence belongs to the VPS35 family. As to quaternary structure, component of the retromer complex.

It localises to the membrane. Its function is as follows. Plays a role in vesicular protein sorting. Required for the endosome-to-Golgi retrieval of the vacuolar protein sorting receptor vps10. Required to form proper forespore membranes. The protein is Vacuolar protein sorting-associated protein 35 (vps35) of Schizosaccharomyces pombe (strain 972 / ATCC 24843) (Fission yeast).